Reading from the N-terminus, the 195-residue chain is Phosphoheptose isomerase (195 aa).

Residues 36–195 (LAHCLLSDGK…DLVDHQLFGE (160 aa)) form the SIS domain. 51-53 (NGG) serves as a coordination point for substrate. The Zn(2+) site is built by H60 and E64. Substrate contacts are provided by residues E64, 93–94 (ND), 119–121 (STS), S124, and Q174. The Zn(2+) site is built by Q174 and H182.

This sequence belongs to the SIS family. GmhA subfamily. In terms of assembly, homotetramer. Zn(2+) serves as cofactor.

The protein localises to the cytoplasm. It catalyses the reaction 2 D-sedoheptulose 7-phosphate = D-glycero-alpha-D-manno-heptose 7-phosphate + D-glycero-beta-D-manno-heptose 7-phosphate. It participates in carbohydrate biosynthesis; D-glycero-D-manno-heptose 7-phosphate biosynthesis; D-glycero-alpha-D-manno-heptose 7-phosphate and D-glycero-beta-D-manno-heptose 7-phosphate from sedoheptulose 7-phosphate: step 1/1. In terms of biological role, catalyzes the isomerization of sedoheptulose 7-phosphate in D-glycero-D-manno-heptose 7-phosphate. The protein is Phosphoheptose isomerase of Methylococcus capsulatus (strain ATCC 33009 / NCIMB 11132 / Bath).